The primary structure comprises 80 residues: Teretoxin Tsu6.5 (80 aa).

A signal peptide spans 1 to 21 (MAINGRLLCLCLVLGLVFESL). Positions 22 to 42 (GHPSVQEKRAAEDSKPSGERR) are excised as a propeptide.

Belongs to the teretoxin M (TM) superfamily. Contains 3 disulfide bonds. As to expression, expressed by the venom duct.

It localises to the secreted. The chain is Teretoxin Tsu6.5 from Terebra subulata (Chocolate spotted auger).